Reading from the N-terminus, the 827-residue chain is Leucine--tRNA ligase (827 aa).

Positions 42 to 52 (PYPSGKLHMGH) match the 'HIGH' region motif. The 'KMSKS' region signature appears at 581–585 (KMSKS). Lysine 584 serves as a coordination point for ATP.

Belongs to the class-I aminoacyl-tRNA synthetase family.

The protein resides in the cytoplasm. It catalyses the reaction tRNA(Leu) + L-leucine + ATP = L-leucyl-tRNA(Leu) + AMP + diphosphate. In Desulforamulus reducens (strain ATCC BAA-1160 / DSM 100696 / MI-1) (Desulfotomaculum reducens), this protein is Leucine--tRNA ligase.